A 447-amino-acid polypeptide reads, in one-letter code: Tubulin alpha-1 chain (447 aa).

Residues glutamine 11, glutamate 72, serine 141, glycine 145, threonine 146, threonine 180, asparagine 207, and asparagine 229 each coordinate GTP. Residue glutamate 72 coordinates Mg(2+). Glutamate 255 is a catalytic residue.

This sequence belongs to the tubulin family. As to quaternary structure, dimer of alpha and beta chains. A typical microtubule is a hollow water-filled tube with an outer diameter of 25 nm and an inner diameter of 15 nM. Alpha-beta heterodimers associate head-to-tail to form protofilaments running lengthwise along the microtubule wall with the beta-tubulin subunit facing the microtubule plus end conferring a structural polarity. Microtubules usually have 13 protofilaments but different protofilament numbers can be found in some organisms and specialized cells. It depends on Mg(2+) as a cofactor.

The protein resides in the cytoplasm. Its subcellular location is the cytoskeleton. The catalysed reaction is GTP + H2O = GDP + phosphate + H(+). Functionally, tubulin is the major constituent of microtubules, a cylinder consisting of laterally associated linear protofilaments composed of alpha- and beta-tubulin heterodimers. Microtubules grow by the addition of GTP-tubulin dimers to the microtubule end, where a stabilizing cap forms. Below the cap, tubulin dimers are in GDP-bound state, owing to GTPase activity of alpha-tubulin. The chain is Tubulin alpha-1 chain (TUB1) from Saccharomyces cerevisiae (strain ATCC 204508 / S288c) (Baker's yeast).